The primary structure comprises 464 residues: MKRKKTVLHHILAEKQKFEKRKEGGSMSAKDEFGTTKYVIYAEFEANGIVERPDVVGAIFGQTEGLLGDDLDLRELQKTGRIGRIRVEVHAKAGKTYGTITVPSSLDRVETAILAAALETIDRVGPAEAKIKVLRIEDVRATKRKYIIERAKEILETLMEQEIPETQELTEEVKKAVRAKELIEYGPEKLPAGPHVPFSDSIIVVEGRADVLNLLKHGIKNAIAVEGTSVPETIIKLSKERIVTAFTDGDRGGELILKELLQVADVDYVARAPEGKEVEELTKKEIVKALRSKVPAEQVITEIFYKGRNFYEVIKEKERAKNGREEKVREVKPPAPAPAPAPAPKPIEKPEPKEREEKIVKPIQQPRPSELDEFGEFIEKVKSSKDSMALLLDKDKSVIAEIPVRELTNQLKERKDVYAVVFNGVITQRLIDTVSESGVKYLVGARKYNVVRRPVNLKIVTFAE.

Residues 200-274 enclose the Toprim domain; the sequence is DSIIVVEGRA…DVDYVARAPE (75 aa). Mg(2+)-binding residues include glutamate 206, aspartate 248, and aspartate 250. The segment covering 322 to 332 has biased composition (basic and acidic residues); the sequence is NGREEKVREVK. Residues 322–359 are disordered; the sequence is NGREEKVREVKPPAPAPAPAPAPKPIEKPEPKEREEKI. Pro residues predominate over residues 333–345; the sequence is PPAPAPAPAPAPK. Residues 346-359 are compositionally biased toward basic and acidic residues; it reads PIEKPEPKEREEKI.

The protein belongs to the archaeal DnaG primase family. In terms of assembly, forms a ternary complex with MCM helicase and DNA. Component of the archaeal exosome complex. Mg(2+) is required as a cofactor.

The enzyme catalyses ssDNA + n NTP = ssDNA/pppN(pN)n-1 hybrid + (n-1) diphosphate.. Functionally, RNA polymerase that catalyzes the synthesis of short RNA molecules used as primers for DNA polymerase during DNA replication. Also part of the exosome, which is a complex involved in RNA degradation. Acts as a poly(A)-binding protein that enhances the interaction between heteromeric, adenine-rich transcripts and the exosome. In Thermococcus onnurineus (strain NA1), this protein is DNA primase DnaG.